A 380-amino-acid polypeptide reads, in one-letter code: Alcohol dehydrogenase 1 (380 aa).

Zn(2+) contacts are provided by C48, T50, H70, C100, C103, C106, C114, and C178. Residues T50 and H70 each coordinate an alcohol. T50 contributes to the NAD(+) binding site. NAD(+) is bound by residues 203 to 208 (GLGAVG), D227, R232, T273, V296, 296 to 298 (VGV), F323, and R373.

It belongs to the zinc-containing alcohol dehydrogenase family. Homodimer. Homotetramer. The cofactor is Zn(2+).

It is found in the cytoplasm. It carries out the reaction a primary alcohol + NAD(+) = an aldehyde + NADH + H(+). It catalyses the reaction a secondary alcohol + NAD(+) = a ketone + NADH + H(+). This chain is Alcohol dehydrogenase 1 (ADH1), found in Solanum tuberosum (Potato).